A 408-amino-acid chain; its full sequence is MTFHTLNELIADGVRGRYILVRSDLNVPLDGSEVTDDGRIKASLPVLTKLTDAGARVLVTAHLGRPKGAPEEKYSLKPAATRLAELAPFQVTLAGDTVGASAKEHAAALQDGEVLVLENVRFDARETSKDDAERGAFADELVSLTGENGAFVDDAFGAVHRKHASVYDVATRLPSYQGDLVHTEVEVLRKLTTETQRPYVVVLGGSKVSDKLAVIDNLIGKADTILVGGGMLFTFLAADGHKVAGSLLEEDQIPVVQDYLKRAADAGTEFVVPTDVVVAAKFAADADHETVRADAIEGSSFGAQGIGLDIGPESAAEFANRIKGAKTVFWNGPMGVFEFDAFAGGTRAIALALTEADAFTVVGGGDSAAAVRTLGFADDQFGHISTGGGASLEYLEGKELPGLSVLDR.

Substrate contacts are provided by residues 24–26 (DLN), Arg39, 62–65 (HLGR), Arg121, and Arg161. Residues Lys211, Gly307, Glu338, and 364-367 (GGDS) contribute to the ATP site.

The protein belongs to the phosphoglycerate kinase family. As to quaternary structure, monomer.

The protein localises to the cytoplasm. It carries out the reaction (2R)-3-phosphoglycerate + ATP = (2R)-3-phospho-glyceroyl phosphate + ADP. It participates in carbohydrate degradation; glycolysis; pyruvate from D-glyceraldehyde 3-phosphate: step 2/5. The polypeptide is Phosphoglycerate kinase (Arthrobacter sp. (strain FB24)).